The primary structure comprises 126 residues: MQITLLKGKLHMAKVTQAELWYDGSCAIDEEFVKLAGLREFEQIEIYNVDNGERFSTYVILAEAGSRTISMNGAAARKVQVGDRVIIAAYSQMSEAEADSFKPRLVYLDKDNAVERTTNTIPVQAA.

Serine 25 acts as the Schiff-base intermediate with substrate; via pyruvic acid in catalysis. A Pyruvic acid (Ser) modification is found at serine 25. Position 57 (threonine 57) interacts with substrate. Catalysis depends on tyrosine 58, which acts as the Proton donor. A substrate-binding site is contributed by 73-75 (GAA).

This sequence belongs to the PanD family. Heterooctamer of four alpha and four beta subunits. The cofactor is pyruvate. Is synthesized initially as an inactive proenzyme, which is activated by self-cleavage at a specific serine bond to produce a beta-subunit with a hydroxyl group at its C-terminus and an alpha-subunit with a pyruvoyl group at its N-terminus.

The protein localises to the cytoplasm. It catalyses the reaction L-aspartate + H(+) = beta-alanine + CO2. The protein operates within cofactor biosynthesis; (R)-pantothenate biosynthesis; beta-alanine from L-aspartate: step 1/1. Its function is as follows. Catalyzes the pyruvoyl-dependent decarboxylation of aspartate to produce beta-alanine. The chain is Aspartate 1-decarboxylase from Saccharophagus degradans (strain 2-40 / ATCC 43961 / DSM 17024).